Here is a 356-residue protein sequence, read N- to C-terminus: MKHKLIDDELKYLDERSRDIFRHIVEAYLNDGGPVGSRNLSRLLRQTLSPATIRNVMSDLEHLGLIYAPHVSAGRMPTQSGLRFFVDAFMEAGDLPNEERENIEAQVKEAGHAQSVEHFLVQASQVLSDLSRGAGLVLATKHEGTLKHIEFVRLDGEHALAVLVTQQGGVENRIVHLPEGVTHAQLTEATNFLNAHIQGLTLSEAKEEIARLCSETRAALDHLSHHLVETGLALWGGEGADHKIRLIVRGRSNLLEDVKAEEDLKRLRHLFDDLETRESMAQLLDLTDEGSGVRIFIGSENKLFSLSGSSLVVAPYRDSQQKVIGALGVIGPTRLNYARIVPMVDYTAQLVSQLLR.

This sequence belongs to the HrcA family.

Its function is as follows. Negative regulator of class I heat shock genes (grpE-dnaK-dnaJ and groELS operons). Prevents heat-shock induction of these operons. In Bartonella henselae (strain ATCC 49882 / DSM 28221 / CCUG 30454 / Houston 1) (Rochalimaea henselae), this protein is Heat-inducible transcription repressor HrcA.